We begin with the raw amino-acid sequence, 320 residues long: Protein EI24 homolog (320 aa).

3 helical membrane passes run 41–61 (QCFL…KWFI), 94–114 (GLLQ…SFIL), and 175–195 (ILLL…PYIG). Asn-217 is a glycosylation site (N-linked (GlcNAc...) asparagine). The next 3 helical transmembrane spans lie at 227 to 247 (LDFF…CVLA), 248 to 268 (IFFL…PLFV), and 292 to 312 (LGKL…LSIF).

The protein belongs to the EI24 (TC 9.B.7) family.

It localises to the membrane. This is Protein EI24 homolog from Arabidopsis thaliana (Mouse-ear cress).